The chain runs to 492 residues: Probable cytochrome P450 313a3 (492 aa).

C438 is a heme binding site.

This sequence belongs to the cytochrome P450 family. Heme serves as cofactor.

It is found in the endoplasmic reticulum membrane. It localises to the microsome membrane. May be involved in the metabolism of insect hormones and in the breakdown of synthetic insecticides. The polypeptide is Probable cytochrome P450 313a3 (Cyp313a3) (Drosophila melanogaster (Fruit fly)).